A 612-amino-acid polypeptide reads, in one-letter code: Sulfite reductase [NADPH] flavoprotein alpha-component (612 aa).

The region spanning Val-64–Val-202 is the Flavodoxin-like domain. FMN-binding positions include Ser-70–Ala-75, Ser-117–Gly-120, and Leu-153–Cys-162. An FAD-binding FR-type domain is found at Thr-247–Pro-461. Residues Thr-335, Lys-369, Arg-399 to Ser-402, Thr-417 to Gly-419, Tyr-423, and Gly-432 to Ser-435 each bind FAD. Residues Ser-532–Arg-533, Lys-538–Gln-542, and Asp-574 each bind NADP(+). Residue Tyr-612 participates in FAD binding.

Belongs to the NADPH-dependent sulphite reductase flavoprotein subunit CysJ family. The protein in the N-terminal section; belongs to the flavodoxin family. It in the C-terminal section; belongs to the flavoprotein pyridine nucleotide cytochrome reductase family. Alpha(8)-beta(8). The alpha component is a flavoprotein, the beta component is a hemoprotein. It depends on FAD as a cofactor. Requires FMN as cofactor.

It catalyses the reaction hydrogen sulfide + 3 NADP(+) + 3 H2O = sulfite + 3 NADPH + 4 H(+). It functions in the pathway sulfur metabolism; hydrogen sulfide biosynthesis; hydrogen sulfide from sulfite (NADPH route): step 1/1. In terms of biological role, component of the sulfite reductase complex that catalyzes the 6-electron reduction of sulfite to sulfide. This is one of several activities required for the biosynthesis of L-cysteine from sulfate. The flavoprotein component catalyzes the electron flow from NADPH -&gt; FAD -&gt; FMN to the hemoprotein component. The protein is Sulfite reductase [NADPH] flavoprotein alpha-component of Yersinia pseudotuberculosis serotype O:1b (strain IP 31758).